Here is a 159-residue protein sequence, read N- to C-terminus: Small ribosomal subunit protein uS7 (159 aa).

This sequence belongs to the universal ribosomal protein uS7 family. Part of the 30S ribosomal subunit. Contacts proteins S9 and S11.

One of the primary rRNA binding proteins, it binds directly to 16S rRNA where it nucleates assembly of the head domain of the 30S subunit. Is located at the subunit interface close to the decoding center, probably blocks exit of the E-site tRNA. This Sulfurihydrogenibium sp. (strain YO3AOP1) protein is Small ribosomal subunit protein uS7.